A 284-amino-acid chain; its full sequence is Nucleotide-binding protein Sbal_3671 (284 aa).

Position 8 to 15 (8 to 15 (GRSGSGKS)) interacts with ATP. 56-59 (DVRN) contributes to the GTP binding site.

This sequence belongs to the RapZ-like family.

Its function is as follows. Displays ATPase and GTPase activities. This is Nucleotide-binding protein Sbal_3671 from Shewanella baltica (strain OS155 / ATCC BAA-1091).